A 142-amino-acid chain; its full sequence is Large ribosomal subunit protein uL11 (142 aa).

It belongs to the universal ribosomal protein uL11 family. In terms of assembly, part of the ribosomal stalk of the 50S ribosomal subunit. Interacts with L10 and the large rRNA to form the base of the stalk. L10 forms an elongated spine to which L12 dimers bind in a sequential fashion forming a multimeric L10(L12)X complex. One or more lysine residues are methylated.

Forms part of the ribosomal stalk which helps the ribosome interact with GTP-bound translation factors. The polypeptide is Large ribosomal subunit protein uL11 (Leptospira interrogans serogroup Icterohaemorrhagiae serovar copenhageni (strain Fiocruz L1-130)).